A 148-amino-acid chain; its full sequence is Large ribosomal subunit protein bL9 (148 aa).

The protein belongs to the bacterial ribosomal protein bL9 family.

In terms of biological role, binds to the 23S rRNA. The protein is Large ribosomal subunit protein bL9 of Staphylococcus saprophyticus subsp. saprophyticus (strain ATCC 15305 / DSM 20229 / NCIMB 8711 / NCTC 7292 / S-41).